A 170-amino-acid polypeptide reads, in one-letter code: METRSKPQLLVFLTLFSVLFSQTLAWPLFGAPSALRMGDRIPFEGANEPDQVSLKADTDILQDALAENDTPYYDVSRNVRHADGVFTSDYSRLLGQLSAKKYLESLIGKRVSNSISEDQGPIKRHSDAVFTDNYTRLRKQMAVKKYLNSILNGKRSSEGESPDFLEELEK.

The signal sequence occupies residues 1 to 25; sequence METRSKPQLLVFLTLFSVLFSQTLA. Positions 26–79 are excised as a propeptide; it reads WPLFGAPSALRMGDRIPFEGANEPDQVSLKADTDILQDALAENDTPYYDVSRNV. Ser-76 is modified (phosphoserine). Ile-107 carries the post-translational modification Isoleucine amide. A propeptide spanning residues 111–122 is cleaved from the precursor; it reads VSNSISEDQGPI. Asparagine amide is present on Asn-152. Residues 156-170 constitute a propeptide that is removed on maturation; sequence SSEGESPDFLEELEK.

It belongs to the glucagon family.

It localises to the secreted. In terms of biological role, VIP is a neuropeptide involved in a diverse array of physiological processes through activating the PACAP subfamily of class B1 G protein-coupled receptors: VIP receptor 1 (VPR1) and VIP receptor 2 (VPR2). Abundantly expressed throughout the CNS and peripheral nervous systems where they primarily exert neuroprotective and immune modulatory roles. Also causes vasodilation, lowers arterial blood pressure, stimulates myocardial contractility, increases glycogenolysis and relaxes the smooth muscle of trachea, stomach and gall bladder. Its function is as follows. PHM-27 is a bioactive form from proteolysis of the same precursor protein, that causes vasodilation. It is a potent agonist of the calcitonin receptor CALCR, with similar efficacy as calcitonin. The chain is VIP peptides (VIP) from Bos taurus (Bovine).